A 341-amino-acid chain; its full sequence is UDP-3-O-acylglucosamine N-acyltransferase (341 aa).

H241 acts as the Proton acceptor in catalysis.

This sequence belongs to the transferase hexapeptide repeat family. LpxD subfamily. Homotrimer.

The catalysed reaction is a UDP-3-O-[(3R)-3-hydroxyacyl]-alpha-D-glucosamine + a (3R)-hydroxyacyl-[ACP] = a UDP-2-N,3-O-bis[(3R)-3-hydroxyacyl]-alpha-D-glucosamine + holo-[ACP] + H(+). It functions in the pathway bacterial outer membrane biogenesis; LPS lipid A biosynthesis. Its function is as follows. Catalyzes the N-acylation of UDP-3-O-acylglucosamine using 3-hydroxyacyl-ACP as the acyl donor. Is involved in the biosynthesis of lipid A, a phosphorylated glycolipid that anchors the lipopolysaccharide to the outer membrane of the cell. This Saccharophagus degradans (strain 2-40 / ATCC 43961 / DSM 17024) protein is UDP-3-O-acylglucosamine N-acyltransferase.